The chain runs to 338 residues: Anthranilate phosphoribosyltransferase (338 aa).

5-phospho-alpha-D-ribose 1-diphosphate-binding positions include Gly-81, 84–85, Thr-89, 91–94, 109–117, and Ala-121; these read GD, NIST, and KHGNRNLSS. Anthranilate is bound at residue Gly-81. Position 93 (Ser-93) interacts with Mg(2+). Asn-112 is a binding site for anthranilate. Arg-167 contributes to the anthranilate binding site. Residues Asp-226 and Glu-227 each contribute to the Mg(2+) site.

Belongs to the anthranilate phosphoribosyltransferase family. In terms of assembly, homodimer. Mg(2+) is required as a cofactor.

The enzyme catalyses N-(5-phospho-beta-D-ribosyl)anthranilate + diphosphate = 5-phospho-alpha-D-ribose 1-diphosphate + anthranilate. The protein operates within amino-acid biosynthesis; L-tryptophan biosynthesis; L-tryptophan from chorismate: step 2/5. Functionally, catalyzes the transfer of the phosphoribosyl group of 5-phosphorylribose-1-pyrophosphate (PRPP) to anthranilate to yield N-(5'-phosphoribosyl)-anthranilate (PRA). In Cereibacter sphaeroides (strain ATCC 17023 / DSM 158 / JCM 6121 / CCUG 31486 / LMG 2827 / NBRC 12203 / NCIMB 8253 / ATH 2.4.1.) (Rhodobacter sphaeroides), this protein is Anthranilate phosphoribosyltransferase.